We begin with the raw amino-acid sequence, 513 residues long: ATP synthase subunit alpha (513 aa).

169–176 (GDRQTGKT) is a binding site for ATP.

The protein belongs to the ATPase alpha/beta chains family. In terms of assembly, F-type ATPases have 2 components, CF(1) - the catalytic core - and CF(0) - the membrane proton channel. CF(1) has five subunits: alpha(3), beta(3), gamma(1), delta(1), epsilon(1). CF(0) has three main subunits: a(1), b(2) and c(9-12). The alpha and beta chains form an alternating ring which encloses part of the gamma chain. CF(1) is attached to CF(0) by a central stalk formed by the gamma and epsilon chains, while a peripheral stalk is formed by the delta and b chains.

It is found in the cell inner membrane. It carries out the reaction ATP + H2O + 4 H(+)(in) = ADP + phosphate + 5 H(+)(out). Produces ATP from ADP in the presence of a proton gradient across the membrane. The alpha chain is a regulatory subunit. The polypeptide is ATP synthase subunit alpha (Thioalkalivibrio sulfidiphilus (strain HL-EbGR7)).